The following is a 362-amino-acid chain: MSTASVMDLVRDDLRAFAGYASARTSALQGDVWLNANESAWGNPADPDASTRRYPDPQPKGLRAALAQLYGCATEQLLIGRGSDEAIDLLVRGLCVPERDAVVVTPPVFGMYAVCARLQSAPLVEVPLVDGADGLHADVPAIVQAALDAKAKLVFLCSPSNPAGSAIPLAEIEAALQALQGKAVVVVDEAYGEFSDVPSAIGLLARYDNLAVLRTLSKAHALAAARIGSLIANAELIALLRRCQAPYPVPTPCAVMAEQALSAPALAVTQRRVTEIRAERARLHAALVQVAGVRQVYPSQGNFLLVRFDDAEAAFQALLEAGVVVRDQRAVPRLSDALRITIGTPDQNDRVLGALQRKQEAA.

Position 218 is an N6-(pyridoxal phosphate)lysine (lysine 218).

This sequence belongs to the class-II pyridoxal-phosphate-dependent aminotransferase family. Histidinol-phosphate aminotransferase subfamily. In terms of assembly, homodimer. The cofactor is pyridoxal 5'-phosphate.

The catalysed reaction is L-histidinol phosphate + 2-oxoglutarate = 3-(imidazol-4-yl)-2-oxopropyl phosphate + L-glutamate. It participates in amino-acid biosynthesis; L-histidine biosynthesis; L-histidine from 5-phospho-alpha-D-ribose 1-diphosphate: step 7/9. This Xanthomonas campestris pv. campestris (strain ATCC 33913 / DSM 3586 / NCPPB 528 / LMG 568 / P 25) protein is Histidinol-phosphate aminotransferase.